Here is a 62-residue protein sequence, read N- to C-terminus: Photosystem II reaction center protein Z (62 aa).

The next 2 helical transmembrane spans lie at 8-28 (LIAA…VVFS) and 41-61 (WGGA…SIVV).

It belongs to the PsbZ family. In terms of assembly, PSII is composed of 1 copy each of membrane proteins PsbA, PsbB, PsbC, PsbD, PsbE, PsbF, PsbH, PsbI, PsbJ, PsbK, PsbL, PsbM, PsbT, PsbX, PsbY, PsbZ, Psb30/Ycf12, peripheral proteins PsbO, CyanoQ (PsbQ), PsbU, PsbV and a large number of cofactors. It forms dimeric complexes.

Its subcellular location is the cellular thylakoid membrane. Functionally, may control the interaction of photosystem II (PSII) cores with the light-harvesting antenna, regulates electron flow through the 2 photosystem reaction centers. PSII is a light-driven water plastoquinone oxidoreductase, using light energy to abstract electrons from H(2)O, generating a proton gradient subsequently used for ATP formation. This is Photosystem II reaction center protein Z from Acaryochloris marina (strain MBIC 11017).